We begin with the raw amino-acid sequence, 534 residues long: BEN domain-containing protein 4 (534 aa).

Disordered stretches follow at residues 1 to 24 (MEEE…RSPY), 48 to 128 (ELPH…AASS), and 287 to 322 (VHTL…EEGY). Positions 53–63 (RAPPPPPPPFA) are enriched in pro residues. Residues 69-83 (SISSSEPPPQQFQAQ) show a composition bias toward polar residues. Residues 91–109 (GRAAAAASSSSPSCTPATS) are compositionally biased toward low complexity. The span at 295–310 (SPATSESHGHPSSSTL) shows a compositional bias: polar residues. Residues 311–321 (PEEEEEEDEEG) show a composition bias toward acidic residues. Positions 324–351 (PRCQELEQEVISLQQENEELRRKLESIP) form a coiled coil. Residues 390–498 (NYPVYITSKQ…DAVGHARQGR (109 aa)) enclose the BEN domain.

This Homo sapiens (Human) protein is BEN domain-containing protein 4 (BEND4).